The primary structure comprises 244 residues: Gasdermin-like protein rcd-1-2 (244 aa).

Positions 1 to 22 (MDNEEWFPLKQTHYPPPTIPSM) are disordered.

The protein belongs to the gasdermin family. As to quaternary structure, heterooligomer; the heterooligomer with rcd-1-1 forms a ring-shaped pore complex when inserted in the membrane.

The protein resides in the cytoplasm. Its subcellular location is the cell membrane. In terms of biological role, gasdermin-like protein involved in heterokaryon incompatibility, a process that ensures that during spontaneous vegetative cell fusion, only compatible cells from the same colony survive (non-self-recognition). In N.crassa, the rcd-1 locus exists as 2 incompatible alleles, rcd-1-1 (AC Q7SBA0) and rcd-1-2 (this entry). During the allorecognition process, forms a heterooligomer with rcd-1-1, thereby forming a functional gasdermin-like complex that binds to membranes and forms pores, triggering cell death. Binds negatively charged phospholipids, such as cardiolipin and phosphatidylserine. Also binds to phosphoinositides, preferentially to phosphatidylinositol-3-phosphate (PtdIns-3-P), PtdIns-5-P and PtdIns-3,5-P2. The chain is Gasdermin-like protein rcd-1-2 from Neurospora crassa.